A 302-amino-acid chain; its full sequence is Pantothenate synthetase (302 aa).

47–54 (MGALHEGH) provides a ligand contact to ATP. His54 acts as the Proton donor in catalysis. Gln79 provides a ligand contact to (R)-pantoate. Gln79 contacts beta-alanine. Residue 165–168 (GEKD) coordinates ATP. Gln171 contacts (R)-pantoate. ATP contacts are provided by residues Val194 and 202–205 (LSSR).

This sequence belongs to the pantothenate synthetase family. In terms of assembly, homodimer.

The protein localises to the cytoplasm. The catalysed reaction is (R)-pantoate + beta-alanine + ATP = (R)-pantothenate + AMP + diphosphate + H(+). The protein operates within cofactor biosynthesis; (R)-pantothenate biosynthesis; (R)-pantothenate from (R)-pantoate and beta-alanine: step 1/1. Functionally, catalyzes the condensation of pantoate with beta-alanine in an ATP-dependent reaction via a pantoyl-adenylate intermediate. This is Pantothenate synthetase from Saccharopolyspora erythraea (strain ATCC 11635 / DSM 40517 / JCM 4748 / NBRC 13426 / NCIMB 8594 / NRRL 2338).